We begin with the raw amino-acid sequence, 475 residues long: Aspartyl/glutamyl-tRNA(Asn/Gln) amidotransferase subunit B (475 aa).

This sequence belongs to the GatB/GatE family. GatB subfamily. Heterotrimer of A, B and C subunits.

It catalyses the reaction L-glutamyl-tRNA(Gln) + L-glutamine + ATP + H2O = L-glutaminyl-tRNA(Gln) + L-glutamate + ADP + phosphate + H(+). The catalysed reaction is L-aspartyl-tRNA(Asn) + L-glutamine + ATP + H2O = L-asparaginyl-tRNA(Asn) + L-glutamate + ADP + phosphate + 2 H(+). Functionally, allows the formation of correctly charged Asn-tRNA(Asn) or Gln-tRNA(Gln) through the transamidation of misacylated Asp-tRNA(Asn) or Glu-tRNA(Gln) in organisms which lack either or both of asparaginyl-tRNA or glutaminyl-tRNA synthetases. The reaction takes place in the presence of glutamine and ATP through an activated phospho-Asp-tRNA(Asn) or phospho-Glu-tRNA(Gln). This Helicobacter pylori (strain HPAG1) protein is Aspartyl/glutamyl-tRNA(Asn/Gln) amidotransferase subunit B.